Here is a 435-residue protein sequence, read N- to C-terminus: Galactomannan galactosyltransferase 1 (435 aa).

Residues 1–20 (MAKFGSRNKSPKWISNGCCF) lie on the Cytoplasmic side of the membrane. Residues 21-41 (LLGAFTALLLLWGLCSFIIPI) traverse the membrane as a helical; Signal-anchor for type II membrane protein segment. The Lumenal segment spans residues 42–435 (PNTDPKLNSV…SPLPFGYPAA (394 aa)). 2 N-linked (GlcNAc...) asparagine glycosylation sites follow: N230 and N328. Positions 321–354 (EIVKTYENISERYDEVERKVEGLRRRHAEKVSEK) form a coiled coil.

Belongs to the glycosyltransferase 34 family.

The protein resides in the golgi apparatus membrane. Functionally, galactomannan galactosyltransferase (GMGT) involved in galactomannan biosynthesis in seed endosperm. GMGT specificity is an important factor regulating the distribution and amount of alpha-1,6-galactose (Gal) substitution of the beta-1,4-linked mannan backbone. This Cyamopsis tetragonoloba (Guar) protein is Galactomannan galactosyltransferase 1 (GMGT1).